The primary structure comprises 493 residues: Transmembrane and coiled-coil domain-containing protein 6 (493 aa).

Residues 15–84 adopt a coiled-coil conformation; that stretch reads GVEELRRRRR…QRGTEEKERE (70 aa). 2 consecutive transmembrane segments (helical) span residues 338-358 and 386-406; these read VVAA…SLLP and PLLQ…TVLC.

The protein localises to the membrane. In Homo sapiens (Human), this protein is Transmembrane and coiled-coil domain-containing protein 6 (TMCO6).